Here is a 143-residue protein sequence, read N- to C-terminus: MTESETTSKKVNKRVKPVPKSTKAGLIFPVGRIHRMLKNKVPLKRVSILSSVYLAAILEYLASEVLELTISQVSIQSKEYHNVRRISPRHLLLAIKTDEELDNLIRVSTTIAGGGVIPYIHEVLKKVEQKPTHPQQKQTIKSI.

The protein belongs to the histone H2A family. The nucleosome is a histone octamer containing two molecules each of H2A, H2B, H3 and H4 assembled in one H3-H4 heterotetramer and two H2A-H2B heterodimers. The octamer wraps approximately 147 bp of DNA.

It localises to the nucleus. The protein resides in the chromosome. Functionally, core component of nucleosome which plays a central role in DNA double strand break (DSB) repair. Nucleosomes wrap and compact DNA into chromatin, limiting DNA accessibility to the cellular machineries which require DNA as a template. Histones thereby play a central role in transcription regulation, DNA repair, DNA replication and chromosomal stability. DNA accessibility is regulated via a complex set of post-translational modifications of histones, also called histone code, and nucleosome remodeling. This is Histone H2A.z (H2AZ) from Dictyostelium discoideum (Social amoeba).